The chain runs to 273 residues: Shikimate kinase (273 aa).

85 to 95 (PVGKGLKSSSA) lines the ATP pocket.

This sequence belongs to the GHMP kinase family. Archaeal shikimate kinase subfamily.

Its subcellular location is the cytoplasm. The catalysed reaction is shikimate + ATP = 3-phosphoshikimate + ADP + H(+). It participates in metabolic intermediate biosynthesis; chorismate biosynthesis; chorismate from D-erythrose 4-phosphate and phosphoenolpyruvate: step 5/7. The protein is Shikimate kinase of Pyrococcus furiosus (strain ATCC 43587 / DSM 3638 / JCM 8422 / Vc1).